A 225-amino-acid chain; its full sequence is UPF0758 protein Bpet3149 (225 aa).

The MPN domain maps to 103 to 225 (AMSEPGSVKR…VVSMAELGLL (123 aa)). Residues H174, H176, and D187 each coordinate Zn(2+). Residues 174 to 187 (HNHPSGSAQPSQAD) carry the JAMM motif motif.

It belongs to the UPF0758 family.

This Bordetella petrii (strain ATCC BAA-461 / DSM 12804 / CCUG 43448) protein is UPF0758 protein Bpet3149.